The primary structure comprises 211 residues: Small ribosomal subunit protein uS3 (211 aa).

Positions 16–85 (IDEYFKGKLV…NPQIEVKPLE (70 aa)) constitute a KH type-2 domain.

Belongs to the universal ribosomal protein uS3 family. In terms of assembly, part of the 30S ribosomal subunit.

Binds the lower part of the 30S subunit head. This chain is Small ribosomal subunit protein uS3, found in Methanococcus vannielii (strain ATCC 35089 / DSM 1224 / JCM 13029 / OCM 148 / SB).